A 95-amino-acid chain; its full sequence is Pyrimidine/purine nucleoside phosphorylase (95 aa).

It belongs to the nucleoside phosphorylase PpnP family.

It carries out the reaction a purine D-ribonucleoside + phosphate = a purine nucleobase + alpha-D-ribose 1-phosphate. It catalyses the reaction adenosine + phosphate = alpha-D-ribose 1-phosphate + adenine. The catalysed reaction is cytidine + phosphate = cytosine + alpha-D-ribose 1-phosphate. The enzyme catalyses guanosine + phosphate = alpha-D-ribose 1-phosphate + guanine. It carries out the reaction inosine + phosphate = alpha-D-ribose 1-phosphate + hypoxanthine. It catalyses the reaction thymidine + phosphate = 2-deoxy-alpha-D-ribose 1-phosphate + thymine. The catalysed reaction is uridine + phosphate = alpha-D-ribose 1-phosphate + uracil. The enzyme catalyses xanthosine + phosphate = alpha-D-ribose 1-phosphate + xanthine. Functionally, catalyzes the phosphorolysis of diverse nucleosides, yielding D-ribose 1-phosphate and the respective free bases. Can use uridine, adenosine, guanosine, cytidine, thymidine, inosine and xanthosine as substrates. Also catalyzes the reverse reactions. This Edwardsiella ictaluri (strain 93-146) protein is Pyrimidine/purine nucleoside phosphorylase.